The following is a 594-amino-acid chain: Gamma-terpinene synthase, chloroplastic (594 aa).

A chloroplast-targeting transit peptide spans 1 to 44; the sequence is MATLSMQVSILSKEVKNVNNIGMRASKPMVARRVSTTRLRPICS. 2 residues coordinate Mn(2+): D347 and D351. The DDXXD motif motif lies at 347 to 351; that stretch reads DDVYD. Homodimerization regions lie at residues 353-359 and 425-462; these read YGTLDEL and EAKWYYAGYTPTLAEYLENAKVSISSPTIISQVYFTLP. Residues D491 and E499 each coordinate Mn(2+).

Belongs to the terpene synthase family. Homodimer. It depends on Mn(2+) as a cofactor. Mg(2+) is required as a cofactor. As to expression, expressed in peltate glandular trichomes.

It localises to the plastid. The protein localises to the chloroplast. The catalysed reaction is (2E)-geranyl diphosphate = gamma-terpinene + diphosphate. The enzyme catalyses (2E)-geranyl diphosphate = alpha-terpinene + diphosphate. It functions in the pathway secondary metabolite biosynthesis; terpenoid biosynthesis. Functionally, involved in the biosynthesis of phenolic monoterpenes natural products thymol and carvacrol which have a broad range of biological activities acting as antimicrobial compounds, insecticides, antioxidants and pharmaceutical agents. Monoterpene synthase which catalyzes the conversion of geranyl diphosphate (GPP) to gamma-terpinene and the minor products alpha-thujene, alpha-terpinene, myrcene, sabinene, (+)-R-limonene, alpha-pinene and alpha-phellandrene. The protein is Gamma-terpinene synthase, chloroplastic of Origanum vulgare (Wild marjoram).